A 305-amino-acid polypeptide reads, in one-letter code: Superkiller complex protein 8 (305 aa).

WD repeat units lie at residues 14 to 57, 62 to 101, 104 to 143, 146 to 187, 188 to 227, 230 to 269, and 272 to 305; these read AHED…LELQ, GHQLGVVSVNISQNGAIAASSSLDAHIRLWDLETGKQIKS, AGPVDAWTVAFSPDSKYIATGSHLGKVNIFGVESGKKEHS, TRGK…HTLE, GHAMPIRSLTFSPDSQLLVTASDDGYIKIYDVQHANLAGT, GHGSWVLSVAFSPDDTHFVSSSSDKSIKVWDTSSRSCVNT, and DHQDQVWSVKYNPTGSKIVSAGDDRAIHIYDCPM.

It belongs to the SKI8 family. As to quaternary structure, component of the PAF1 complex. Component of the SKI complex.

The protein resides in the nucleus. It is found in the cytoplasm. Functionally, component of the PAF1 complex (PAF1C) which has multiple functions during transcription by RNA polymerase II and is implicated in regulation of development and maintenance of embryonic stem cell pluripotency. PAF1C associates with RNA polymerase II through interaction with POLR2A CTD non-phosphorylated and 'Ser-2'- and 'Ser-5'-phosphorylated forms and is involved in transcriptional elongation, acting both independently and synergistically with TCEA1 and in cooperation with the DSIF complex and HTATSF1. Also acts as a component of the SKI complex, a multiprotein complex that assists the RNA-degrading exosome during the mRNA decay and quality-control pathways. The SKI complex catalyzes mRNA extraction from 80S ribosomal complexes in the 3'-5' direction and channels mRNA to the cytosolic exosome for degradation. The chain is Superkiller complex protein 8 (skic8) from Danio rerio (Zebrafish).